Consider the following 218-residue polypeptide: Adenylate kinase (218 aa).

An ATP-binding site is contributed by 10 to 15; that stretch reads GAGKGT. Positions 30–59 are NMP; the sequence is STGDMLRAAINEGTPLGLEAKKVMDAGKLV. Residues Thr-31, Arg-36, 57 to 59, 85 to 88, and Gln-92 each bind AMP; these read KLV and GFPR. The LID stretch occupies residues 122–159; that stretch reads GRRVHPASGRTYHVLFNPPAKEGVDDITGDPLVQREDD. ATP is bound by residues Arg-123 and 132 to 133; that span reads TY. Residues Arg-156 and Arg-167 each coordinate AMP. Gly-203 lines the ATP pocket.

The protein belongs to the adenylate kinase family. In terms of assembly, monomer.

It localises to the cytoplasm. It carries out the reaction AMP + ATP = 2 ADP. It participates in purine metabolism; AMP biosynthesis via salvage pathway; AMP from ADP: step 1/1. Its function is as follows. Catalyzes the reversible transfer of the terminal phosphate group between ATP and AMP. Plays an important role in cellular energy homeostasis and in adenine nucleotide metabolism. The sequence is that of Adenylate kinase from Chlorobium phaeobacteroides (strain BS1).